A 334-amino-acid chain; its full sequence is Ketol-acid reductoisomerase (NADP(+)) (334 aa).

Positions 2 to 181 constitute a KARI N-terminal Rossmann domain; it reads TKVYYDETVT…GATRAGVIET (180 aa). Residues 25 to 28, R48, S52, and 82 to 85 contribute to the NADP(+) site; these read YGSQ and DEIQ. H107 is a catalytic residue. Residue G133 participates in NADP(+) binding. In terms of domain architecture, KARI C-terminal knotted spans 182 to 327; the sequence is TFKEETETDL…RELREMMPFI (146 aa). Mg(2+)-binding residues include D190, E194, E226, and E230. S251 contacts substrate.

The protein belongs to the ketol-acid reductoisomerase family. The cofactor is Mg(2+).

The catalysed reaction is (2R)-2,3-dihydroxy-3-methylbutanoate + NADP(+) = (2S)-2-acetolactate + NADPH + H(+). It carries out the reaction (2R,3R)-2,3-dihydroxy-3-methylpentanoate + NADP(+) = (S)-2-ethyl-2-hydroxy-3-oxobutanoate + NADPH + H(+). It functions in the pathway amino-acid biosynthesis; L-isoleucine biosynthesis; L-isoleucine from 2-oxobutanoate: step 2/4. Its pathway is amino-acid biosynthesis; L-valine biosynthesis; L-valine from pyruvate: step 2/4. Functionally, involved in the biosynthesis of branched-chain amino acids (BCAA). Catalyzes an alkyl-migration followed by a ketol-acid reduction of (S)-2-acetolactate (S2AL) to yield (R)-2,3-dihydroxy-isovalerate. In the isomerase reaction, S2AL is rearranged via a Mg-dependent methyl migration to produce 3-hydroxy-3-methyl-2-ketobutyrate (HMKB). In the reductase reaction, this 2-ketoacid undergoes a metal-dependent reduction by NADPH to yield (R)-2,3-dihydroxy-isovalerate. The sequence is that of Ketol-acid reductoisomerase (NADP(+)) from Staphylococcus epidermidis (strain ATCC 35984 / DSM 28319 / BCRC 17069 / CCUG 31568 / BM 3577 / RP62A).